The chain runs to 473 residues: Pre-mRNA-splicing factor prp5 (473 aa).

7 WD repeats span residues 161–191, 203–233, 245–275, 287–317, 329–358, 370–399, and 419–449; these read GHLGWVRCVDVEPGNQWFCTGAGDRTIKIWD, GHIATVRGLAVSPRHPYLFSCGEDKMVKCWD, GHLSGVYALKLHPTLDVLVTAGRDAVARVWD, GHKSTVASLAVQEFDPQVVTGSMDSTIRLWD, HHKKTVRALSLHPDEFTFASGSSDNIKHWK, GHNAIVNTLSINSDNVMFSGADNGSMCFWD, and DSEAGIFASSFDKTGLRLITCEADKSVKIYK.

Belongs to the WD repeat PRL1/PRL2 family. In terms of assembly, belongs to the 40S cdc5-associated complex (or cwf complex), a spliceosome sub-complex reminiscent of a late-stage spliceosome composed of the U2, U5 and U6 snRNAs and at least brr2, cdc5, cwf2/prp3, cwf3/syf1, cwf4/syf3, cwf5/ecm2, spp42/cwf6, cwf7/spf27, cwf8, cwf9, cwf10, cwf11, cwf12, prp45/cwf13, cwf14, cwf15, cwf16, cwf17, cwf18, cwf19, cwf20, cwf21, cwf22, cwf23, cwf24, cwf25, cwf26, cyp7/cwf27, cwf28, cwf29/ist3, lea1, msl1, prp5/cwf1, prp10, prp12/sap130, prp17, prp22, sap61, sap62, sap114, sap145, slu7, smb1, smd1, smd3, smf1, smg1 and syf2.

The protein localises to the nucleus. Its function is as follows. Required for both cell cycle progression at G2/M and pre-mRNA splicing. Interacts genetically with the PRP4 kinase. In Schizosaccharomyces pombe (strain 972 / ATCC 24843) (Fission yeast), this protein is Pre-mRNA-splicing factor prp5 (prp5).